The sequence spans 504 residues: Kinesin light chain 3 (504 aa).

Positions 90 to 150 (ALSAHVGALE…EEEKRHLEFL (61 aa)) form a coiled coil. Positions 153-197 (LRQYDPPAESQQSESPPRRDSLASLFPSEEEERKGPEAAGAAAAQ) are disordered. The span at 158–167 (PPAESQQSES) shows a compositional bias: low complexity. S173 carries the phosphoserine modification. TPR repeat units lie at residues 207–240 (LRTL…LERS), 249–282 (ATML…REQT), 291–324 (AATL…REKV), 333–366 (AKQL…YEAL), and 375–408 (AKTK…EDLP). A disordered region spans residues 411-438 (LGAPNTGTAGDAEQALRRSSSLSKIRES). S466 is modified (phosphoserine). Phosphothreonine is present on T498. S502 carries the phosphoserine modification.

The protein belongs to the kinesin light chain family. Oligomer composed of two heavy chains and two light chains. Associates with microtubulin in an ATP-dependent manner. Interacts with KIF5C. Interacts with ODF1. Interacts with LRGUK. Interacts with VDAC2.

Its subcellular location is the cytoplasm. It localises to the cytoskeleton. The protein localises to the mitochondrion. Kinesin is a microtubule-associated force-producing protein that may play a role in organelle transport. Plays a role during spermiogenesis in the development of the sperm tail midpiece and in the normal function of spermatozoa. May play a role in the formation of the mitochondrial sheath formation in the developing spermatid midpiece. In Pongo abelii (Sumatran orangutan), this protein is Kinesin light chain 3 (KLC3).